A 213-amino-acid chain; its full sequence is Transcription antitermination protein NusB (213 aa).

This sequence belongs to the NusB family.

Involved in transcription antitermination. Required for transcription of ribosomal RNA (rRNA) genes. Binds specifically to the boxA antiterminator sequence of the ribosomal RNA (rrn) operons. The protein is Transcription antitermination protein NusB of Picosynechococcus sp. (strain ATCC 27264 / PCC 7002 / PR-6) (Agmenellum quadruplicatum).